Reading from the N-terminus, the 628-residue chain is (-)-beta-pinene synthase 1, chloroplastic (628 aa).

Residues 1-51 (MDLISVLPSASKSCVCLHKPLSSSTHKLKPFCRTIRILGMPRPRKSVLMVS) constitute a chloroplast transit peptide. Residues D379, D383, and D531 each contribute to the Mg(2+) site. A DDXXD motif motif is present at residues 379–383 (DDMYD).

It belongs to the terpene synthase family. Tpsd subfamily. Mg(2+) serves as cofactor. Requires Mn(2+) as cofactor.

The protein localises to the plastid. Its subcellular location is the chloroplast. The enzyme catalyses (2E)-geranyl diphosphate = (1S,5S)-beta-pinene + diphosphate. It catalyses the reaction (2E)-geranyl diphosphate = (1S,5S)-alpha-pinene + diphosphate. It functions in the pathway terpene metabolism; oleoresin biosynthesis. Its pathway is secondary metabolite biosynthesis; terpenoid biosynthesis. Monoterpene synthase (TPS) involved in the biosynthesis of monoterpene natural products included in conifer oleoresin secretions and volatile emissions; these compounds contribute to biotic and abiotic stress defense against herbivores and pathogens. Catalyzes the conversion of (2E)-geranyl diphosphate (GPP) to (-)-beta-pinene and, to a lower extent, to (-)-alpha-pinene. The polypeptide is (-)-beta-pinene synthase 1, chloroplastic (Pinus banksiana (Jack pine)).